An 85-amino-acid polypeptide reads, in one-letter code: Neurtoxin 10 (85 aa).

Residues 1–23 (MKFCVAVSLLIIASMAGVISVSG) form the signal peptide. An LCN-type CS-alpha/beta domain is found at 24–85 (YDVYPRDYAE…NFLSVIWKHC (62 aa)). 3 disulfides stabilise this stretch: C38–C60, C46–C65, and C50–C67.

This sequence belongs to the long (3 C-C) scorpion toxin superfamily. Expressed by the venom gland.

It is found in the secreted. The sequence is that of Neurtoxin 10 from Lychas mucronatus (Chinese swimming scorpion).